Here is a 367-residue protein sequence, read N- to C-terminus: Cobalt-precorrin-5B C(1)-methyltransferase (367 aa).

Belongs to the CbiD family.

It carries out the reaction Co-precorrin-5B + S-adenosyl-L-methionine = Co-precorrin-6A + S-adenosyl-L-homocysteine. It participates in cofactor biosynthesis; adenosylcobalamin biosynthesis; cob(II)yrinate a,c-diamide from sirohydrochlorin (anaerobic route): step 6/10. Catalyzes the methylation of C-1 in cobalt-precorrin-5B to form cobalt-precorrin-6A. This is Cobalt-precorrin-5B C(1)-methyltransferase from Leptospira interrogans serogroup Icterohaemorrhagiae serovar Lai (strain 56601).